The primary structure comprises 842 residues: Protein P (842 aa).

Residues 1 to 177 form a terminal protein domain (TP) region; it reads MPLSYQHFRR…FCGSPYTWEQ (177 aa). Residues 178 to 345 form a spacer region; that stretch reads DLQHGAFLDG…YCLSHLVNLL (168 aa). Positions 184 to 238 are disordered; it reads FLDGPSRVGKEPFRQQSSRIPSRSPVGPSIQSKYQQSRLGLQSQKGPLARGQQGR. The span at 197 to 208 shows a compositional bias: low complexity; that stretch reads RQQSSRIPSRSP. Positions 212–228 are enriched in polar residues; sequence SIQSKYQQSRLGLQSQK. The interval 346–689 is polymerase/reverse transcriptase domain (RT); the sequence is QDWGPCTEHG…YMNLYPVARQ (344 aa). The 244-residue stretch at 356–599 folds into the Reverse transcriptase domain; the sequence is EHHIRIPRTP…YSLNFMGYVI (244 aa). Mg(2+) is bound by residues D428, D550, and D551.

It belongs to the hepadnaviridae P protein family.

The catalysed reaction is DNA(n) + a 2'-deoxyribonucleoside 5'-triphosphate = DNA(n+1) + diphosphate. The enzyme catalyses Endonucleolytic cleavage to 5'-phosphomonoester.. Activated by host HSP70 and HSP40 in vitro to be able to bind the epsilon loop of the pgRNA. Because deletion of the RNase H region renders the protein partly chaperone-independent, the chaperones may be needed indirectly to relieve occlusion of the RNA-binding site by this domain. Inhibited by several reverse-transcriptase inhibitors: Lamivudine, Adefovir and Entecavir. Multifunctional enzyme that converts the viral RNA genome into dsDNA in viral cytoplasmic capsids. This enzyme displays a DNA polymerase activity that can copy either DNA or RNA templates, and a ribonuclease H (RNase H) activity that cleaves the RNA strand of RNA-DNA heteroduplexes in a partially processive 3'- to 5'-endonucleasic mode. Neo-synthesized pregenomic RNA (pgRNA) are encapsidated together with the P protein, and reverse-transcribed inside the nucleocapsid. Initiation of reverse-transcription occurs first by binding the epsilon loop on the pgRNA genome, and is initiated by protein priming, thereby the 5'-end of (-)DNA is covalently linked to P protein. Partial (+)DNA is synthesized from the (-)DNA template and generates the relaxed circular DNA (RC-DNA) genome. After budding and infection, the RC-DNA migrates in the nucleus, and is converted into a plasmid-like covalently closed circular DNA (cccDNA). The activity of P protein does not seem to be necessary for cccDNA generation, and is presumably released from (+)DNA by host nuclear DNA repair machinery. This Hepatitis B virus genotype G (isolate IG29227/2000) (HBV-G) protein is Protein P.